Reading from the N-terminus, the 314-residue chain is Thymidylate synthase (314 aa).

Residues Arg32 and Arg176–Arg177 contribute to the dUMP site. The active-site Nucleophile is Cys196. Residues Arg216–Asp219, Asn227, and His257–Tyr259 each bind dUMP. (6R)-5,10-methylene-5,6,7,8-tetrahydrofolate is bound at residue Asp219. Ala313 contacts (6R)-5,10-methylene-5,6,7,8-tetrahydrofolate.

This sequence belongs to the thymidylate synthase family. Bacterial-type ThyA subfamily. Homodimer.

It is found in the cytoplasm. The catalysed reaction is dUMP + (6R)-5,10-methylene-5,6,7,8-tetrahydrofolate = 7,8-dihydrofolate + dTMP. It functions in the pathway pyrimidine metabolism; dTTP biosynthesis. Functionally, catalyzes the reductive methylation of 2'-deoxyuridine-5'-monophosphate (dUMP) to 2'-deoxythymidine-5'-monophosphate (dTMP) while utilizing 5,10-methylenetetrahydrofolate (mTHF) as the methyl donor and reductant in the reaction, yielding dihydrofolate (DHF) as a by-product. This enzymatic reaction provides an intracellular de novo source of dTMP, an essential precursor for DNA biosynthesis. The protein is Thymidylate synthase of Novosphingobium aromaticivorans (strain ATCC 700278 / DSM 12444 / CCUG 56034 / CIP 105152 / NBRC 16084 / F199).